We begin with the raw amino-acid sequence, 279 residues long: Large ribosomal subunit protein uL2 (279 aa).

Disordered regions lie at residues 29–59 and 224–279; these read PEKS…GGHK and VAMN…KNKR. The span at 50-59 shows a compositional bias: basic residues; it reads TTRHKGGGHK. A compositionally biased stretch (basic and acidic residues) spans 253-268; the sequence is PEGRTRRPNKESDKLI. A compositionally biased stretch (basic residues) spans 269-279; sequence VRRRRTGKNKR.

It belongs to the universal ribosomal protein uL2 family. Part of the 50S ribosomal subunit. Forms a bridge to the 30S subunit in the 70S ribosome.

Its function is as follows. One of the primary rRNA binding proteins. Required for association of the 30S and 50S subunits to form the 70S ribosome, for tRNA binding and peptide bond formation. It has been suggested to have peptidyltransferase activity; this is somewhat controversial. Makes several contacts with the 16S rRNA in the 70S ribosome. The polypeptide is Large ribosomal subunit protein uL2 (Paenarthrobacter aurescens (strain TC1)).